Here is a 114-residue protein sequence, read N- to C-terminus: Transcription factor S1 (114 aa).

The segment at 1–43 (MIVVKFCPKCNSMMVPKKSNGKNVYRCTKCGYEKEVPETTIVV) is N-ZR. 6 residues coordinate Zn(2+): cysteine 7, cysteine 10, cysteine 27, cysteine 30, cysteine 75, and cysteine 78. Residues 63 to 114 (MPSGAQKIKGVLCPSCKNDEAYFWILQTRRADEPPTRFYKCTKCGKVWREYE) are C-ZR. The TFIIS-type zinc finger occupies 71–111 (KGVLCPSCKNDEAYFWILQTRRADEPPTRFYKCTKCGKVWR). Active-site residues include aspartate 94 and glutamate 95. Zn(2+) is bound by residues cysteine 103 and cysteine 106.

Belongs to the archaeal RpoM/eukaryotic RPA12/RPB9/RPC11 RNA polymerase family. In terms of assembly, interacts with RNA polymerase; probably competes with TFS4 for the same binding site. Zn(2+) is required as a cofactor.

Its function is as follows. Induces RNA cleavage activity in the RNA polymerase. Induces rapid cleavage of a stalled transcription elongation complex with a 2-nucleotide reduction at the 3' end of the nascent RNA. Truncated RNA is able to resume elongation. During transcription elongation it enhances processivity. Involved in transcriptional proofreading and fidelity. Misincorporation of nucleotides during elongation of transcription leads to arrested elongation complexes which are rescued by TFS-promoted removal of a dinucleotide from the 3'-end. TFS1 is able to induce a cleavage resynthesis cycle in stalled elongation complexes (resulting from the next missing nucleotide or a reduced incorporation rate of a wrong nucleotide) preventing misincorporation and enabling proofreading in a post-incorporation manner. Pausing of elongation complexes is the main determinant of TFS-induced RNA cleavage. This is Transcription factor S1 from Saccharolobus solfataricus (strain ATCC 35092 / DSM 1617 / JCM 11322 / P2) (Sulfolobus solfataricus).